A 600-amino-acid chain; its full sequence is MEHVTEGSWESLPVPLHPQVLGALRELGFPYMTPVQSATIPLFMRNKDVAAEAVTGSGKTLAFVIPILEILLRREEKLKKSQVGAIIITPTRELAIQIDEVLSHFTKHFPEFSQILWIGGRNPGEDVERFKQQGGNIIVATPGRLEDMFRRKAEGLDLASCVRSLDVLVLDEADRLLDMGFEASINTILEFLPKQRRTGLFSATQTQEVENLVRAGLRNPVRVSVKEKGVAASSAQKTPSRLENYYMVCKADEKFNQLVHFLRNHKQEKHLVFFSTCACVEYYGKALEVLVKGVKIMCIHGKMKYKRNKIFMEFRKLQSGILVCTDVMARGIDIPEVNWVLQYDPPSNASAFVHRCGRTARIGHGGSALVFLLPMEESYINFLAINQKCPLQEMKPQRNTADLLPKLKSMALADRAVFEKGMKAFVSYVQAYAKHECNLIFRLKDLDFASLARGFALLRMPKMPELRGKQFPDFVPVDVNTDTIPFKDKIREKQRQKLLEQQRREKTENEGRRKFIKNKAWSKQKAKKEKKKKMNEKRKREEGSDIEDEDMEELLNDTRLLKKLKKGKITEEEFEKGLLTTGKRTIKTVDLGISDLEDDC.

The Q motif motif lies at 9 to 37 (WESLPVPLHPQVLGALRELGFPYMTPVQS). Residues 40-223 (IPLFMRNKDV…RAGLRNPVRV (184 aa)) form the Helicase ATP-binding domain. An ATP-binding site is contributed by 53–60 (AVTGSGKT). Positions 171-174 (DEAD) match the DEAD box motif. Residues 254–402 (KFNQLVHFLR…EMKPQRNTAD (149 aa)) form the Helicase C-terminal domain. Positions 500 to 513 (EQQRREKTENEGRR) are enriched in basic and acidic residues. Residues 500–550 (EQQRREKTENEGRRKFIKNKAWSKQKAKKEKKKKMNEKRKREEGSDIEDED) form a disordered region. The segment covering 514 to 537 (KFIKNKAWSKQKAKKEKKKKMNEK) has biased composition (basic residues). Residues 533–562 (KMNEKRKREEGSDIEDEDMEELLNDTRLLK) form an important for nuclear localization region. A phosphoserine mark is found at S544 and S594.

Belongs to the DEAD box helicase family. DDX55/SPB4 subfamily. Interacts with 28S rRNA. Interacts with double-stranded RNA substrates in vitro; the interaction stimulates ATPase activity.

The protein resides in the nucleus. It localises to the nucleoplasm. It catalyses the reaction ATP + H2O = ADP + phosphate + H(+). Functionally, probable ATP-binding RNA helicase. Has ATPase activity and is involved in the maturation of precursor large subunit rRNAs. The protein is ATP-dependent RNA helicase DDX55 of Homo sapiens (Human).